Consider the following 92-residue polypeptide: Large ribosomal subunit protein bL36m (92 aa).

A mitochondrion-targeting transit peptide spans 1-54; that stretch reads MASLGRKFFAVGVLSRVFPSAFNAQKGLLKNASMFLTPAFRLSPSLLPWNFSRG.

The protein belongs to the bacterial ribosomal protein bL36 family. As to quaternary structure, component of the mitochondrial large ribosomal subunit (mt-LSU). Mature yeast 74S mitochondrial ribosomes consist of a small (37S) and a large (54S) subunit. The 37S small subunit contains a 15S ribosomal RNA (15S mt-rRNA) and at least 32 different proteins. The 54S large subunit contains a 21S rRNA (21S mt-rRNA) and at least 45 different proteins. bL36m has a zinc binding site.

Its subcellular location is the mitochondrion. Component of the mitochondrial ribosome (mitoribosome), a dedicated translation machinery responsible for the synthesis of mitochondrial genome-encoded proteins, including at least some of the essential transmembrane subunits of the mitochondrial respiratory chain. The mitoribosomes are attached to the mitochondrial inner membrane and translation products are cotranslationally integrated into the membrane. bL36m may be involved in a process influencing telomere capping. This is Large ribosomal subunit protein bL36m (rtc6) from Schizosaccharomyces pombe (strain 972 / ATCC 24843) (Fission yeast).